Consider the following 151-residue polypeptide: Superoxide dismutase [Cu-Zn] 2 (151 aa).

Cu cation contacts are provided by His44, His46, and His61. A disulfide bridge connects residues Cys55 and Cys144. Positions 61, 69, 78, and 81 each coordinate Zn(2+). His118 serves as a coordination point for Cu cation.

This sequence belongs to the Cu-Zn superoxide dismutase family. As to quaternary structure, homodimer. Cu cation serves as cofactor. Requires Zn(2+) as cofactor.

The protein localises to the cytoplasm. The catalysed reaction is 2 superoxide + 2 H(+) = H2O2 + O2. Destroys radicals which are normally produced within the cells and which are toxic to biological systems. This is Superoxide dismutase [Cu-Zn] 2 (SODCC.1) from Zea mays (Maize).